A 276-amino-acid polypeptide reads, in one-letter code: Dermonecrotic toxin LlSicTox-alphaIV1ii (276 aa).

The active site involves H5. Residues E25 and D27 each coordinate Mg(2+). H41 acts as the Nucleophile in catalysis. 2 cysteine pairs are disulfide-bonded: C45-C51 and C47-C193. D85 is a Mg(2+) binding site.

This sequence belongs to the arthropod phospholipase D family. Class II subfamily. Requires Mg(2+) as cofactor. Expressed by the venom gland.

It is found in the secreted. It catalyses the reaction an N-(acyl)-sphingosylphosphocholine = an N-(acyl)-sphingosyl-1,3-cyclic phosphate + choline. The enzyme catalyses an N-(acyl)-sphingosylphosphoethanolamine = an N-(acyl)-sphingosyl-1,3-cyclic phosphate + ethanolamine. It carries out the reaction a 1-acyl-sn-glycero-3-phosphocholine = a 1-acyl-sn-glycero-2,3-cyclic phosphate + choline. The catalysed reaction is a 1-acyl-sn-glycero-3-phosphoethanolamine = a 1-acyl-sn-glycero-2,3-cyclic phosphate + ethanolamine. Dermonecrotic toxins cleave the phosphodiester linkage between the phosphate and headgroup of certain phospholipids (sphingolipid and lysolipid substrates), forming an alcohol (often choline) and a cyclic phosphate. This toxin acts on sphingomyelin (SM). It may also act on ceramide phosphoethanolamine (CPE), lysophosphatidylcholine (LPC) and lysophosphatidylethanolamine (LPE), but not on lysophosphatidylserine (LPS), and lysophosphatidylglycerol (LPG). It acts by transphosphatidylation, releasing exclusively cyclic phosphate products as second products. Induces dermonecrosis, hemolysis, increased vascular permeability, edema, inflammatory response, and platelet aggregation. The polypeptide is Dermonecrotic toxin LlSicTox-alphaIV1ii (Loxosceles laeta (South American recluse spider)).